The following is a 289-amino-acid chain: Thymidylate synthase (289 aa).

Residues arginine 21 and 150–151 contribute to the dUMP site; that span reads RR. The Nucleophile role is filled by cysteine 170. Residues 191–194, asparagine 202, and 232–234 each bind dUMP; these read RSGD and HIY. Aspartate 194 lines the (6R)-5,10-methylene-5,6,7,8-tetrahydrofolate pocket. (6R)-5,10-methylene-5,6,7,8-tetrahydrofolate is bound at residue alanine 288.

Belongs to the thymidylate synthase family. Bacterial-type ThyA subfamily. Homodimer.

The protein localises to the cytoplasm. It carries out the reaction dUMP + (6R)-5,10-methylene-5,6,7,8-tetrahydrofolate = 7,8-dihydrofolate + dTMP. It functions in the pathway pyrimidine metabolism; dTTP biosynthesis. Catalyzes the reductive methylation of 2'-deoxyuridine-5'-monophosphate (dUMP) to 2'-deoxythymidine-5'-monophosphate (dTMP) while utilizing 5,10-methylenetetrahydrofolate (mTHF) as the methyl donor and reductant in the reaction, yielding dihydrofolate (DHF) as a by-product. This enzymatic reaction provides an intracellular de novo source of dTMP, an essential precursor for DNA biosynthesis. The polypeptide is Thymidylate synthase (Mycoplasmopsis synoviae (strain 53) (Mycoplasma synoviae)).